Consider the following 316-residue polypeptide: LIM/homeobox protein lim-6 (316 aa).

2 LIM zinc-binding domains span residues 40-101 and 102-163; these read KLCS…LYGK and RCRR…ICNF. Residues 186–245 constitute a DNA-binding region (homeobox); it reads PKRPRTILNAQQRRQFKTAFERSSKPSRKVREQLANETGLSVRVVQVWFQNQRAKIKKLN. Positions 244–297 are disordered; the sequence is LNKKDSDSGDTFKHGPGSEGRSTEDIRSSDDEEESVINLDADEVETSETSSYTD. Positions 246–256 are enriched in basic and acidic residues; sequence KKDSDSGDTFK. Acidic residues predominate over residues 273 to 289; sequence DDEEESVINLDADEVET.

The protein localises to the nucleus. Transcription factor. Required for the terminal differentiation of sensory- and motor-neurons, especially GABAergic neurons, and for morphological aspects of uterine development. Plays a role in the cell-type-specific regulation of glutamic acid decarboxylase unc-25. Involved in promoting sleep-like behavioral quiescence, acting by modulating expression of transcription factor aptf-1 in the single sleep-active ring interneuron RIS. Plays a role in regulation of RIS differentiation. Required for the functional asymmetry of the ASER and ASEL chemosensory neuron pair, conferring the ability to discriminate sodium from chloride, perhaps by modulating expression of receptor-type guanylate cyclases, such as gcy-5. Involved in regulating postembryonic axon maintenance in the ventral nerve cord, acting in concert with LIM homeobox protein ceh-14, via modulation of expression of immunoglobulin domain zig genes in the interneuron PVT. May play a role in the functions of the excretory gland cell. This is LIM/homeobox protein lim-6 from Caenorhabditis elegans.